We begin with the raw amino-acid sequence, 227 residues long: Cytochrome c oxidase subunit 2 (227 aa).

The Mitochondrial intermembrane portion of the chain corresponds to 1–14 (MAYPFQLGFQDATS). A helical transmembrane segment spans residues 15 to 45 (PIMEELLHFHDHTLMIVFLISSLVLYIITLM). Residues 46 to 59 (LTTKLTHTSTMDAQ) lie on the Mitochondrial matrix side of the membrane. The chain crosses the membrane as a helical span at residues 60-87 (EVETVWTILPAIILILIALPSLRILYMM). The Mitochondrial intermembrane segment spans residues 88-227 (DEVNNPSLTV…FFEKWSASML (140 aa)). Histidine 161, cysteine 196, glutamate 198, cysteine 200, histidine 204, and methionine 207 together coordinate Cu cation. Glutamate 198 serves as a coordination point for Mg(2+).

Belongs to the cytochrome c oxidase subunit 2 family. Component of the cytochrome c oxidase (complex IV, CIV), a multisubunit enzyme composed of 14 subunits. The complex is composed of a catalytic core of 3 subunits MT-CO1, MT-CO2 and MT-CO3, encoded in the mitochondrial DNA, and 11 supernumerary subunits COX4I, COX5A, COX5B, COX6A, COX6B, COX6C, COX7A, COX7B, COX7C, COX8 and NDUFA4, which are encoded in the nuclear genome. The complex exists as a monomer or a dimer and forms supercomplexes (SCs) in the inner mitochondrial membrane with NADH-ubiquinone oxidoreductase (complex I, CI) and ubiquinol-cytochrome c oxidoreductase (cytochrome b-c1 complex, complex III, CIII), resulting in different assemblies (supercomplex SCI(1)III(2)IV(1) and megacomplex MCI(2)III(2)IV(2)). Found in a complex with TMEM177, COA6, COX18, COX20, SCO1 and SCO2. Interacts with TMEM177 in a COX20-dependent manner. Interacts with COX20. Interacts with COX16. The cofactor is Cu cation.

It is found in the mitochondrion inner membrane. It catalyses the reaction 4 Fe(II)-[cytochrome c] + O2 + 8 H(+)(in) = 4 Fe(III)-[cytochrome c] + 2 H2O + 4 H(+)(out). Component of the cytochrome c oxidase, the last enzyme in the mitochondrial electron transport chain which drives oxidative phosphorylation. The respiratory chain contains 3 multisubunit complexes succinate dehydrogenase (complex II, CII), ubiquinol-cytochrome c oxidoreductase (cytochrome b-c1 complex, complex III, CIII) and cytochrome c oxidase (complex IV, CIV), that cooperate to transfer electrons derived from NADH and succinate to molecular oxygen, creating an electrochemical gradient over the inner membrane that drives transmembrane transport and the ATP synthase. Cytochrome c oxidase is the component of the respiratory chain that catalyzes the reduction of oxygen to water. Electrons originating from reduced cytochrome c in the intermembrane space (IMS) are transferred via the dinuclear copper A center (CU(A)) of subunit 2 and heme A of subunit 1 to the active site in subunit 1, a binuclear center (BNC) formed by heme A3 and copper B (CU(B)). The BNC reduces molecular oxygen to 2 water molecules using 4 electrons from cytochrome c in the IMS and 4 protons from the mitochondrial matrix. The chain is Cytochrome c oxidase subunit 2 (MT-CO2) from Balaenoptera musculus (Blue whale).